A 166-amino-acid polypeptide reads, in one-letter code: Endoribonuclease YbeY (166 aa).

The Zn(2+) site is built by His131, His135, and His141.

The protein belongs to the endoribonuclease YbeY family. Zn(2+) is required as a cofactor.

The protein resides in the cytoplasm. Its function is as follows. Single strand-specific metallo-endoribonuclease involved in late-stage 70S ribosome quality control and in maturation of the 3' terminus of the 16S rRNA. In Dehalococcoides mccartyi (strain CBDB1), this protein is Endoribonuclease YbeY.